Reading from the N-terminus, the 238-residue chain is Lactate utilization protein A (238 aa).

The protein belongs to the LutA/YkgE family.

In terms of biological role, is involved in L-lactate degradation and allows cells to grow with lactate as the sole carbon source. The polypeptide is Lactate utilization protein A (Bacillus pumilus (strain SAFR-032)).